We begin with the raw amino-acid sequence, 191 residues long: Flavin prenyltransferase UbiX (191 aa).

FMN-binding positions include 13–15 (GAS), Thr39, 90–93 (TMKT), and Arg125. Tyr155 and Lys171 together coordinate dimethylallyl phosphate.

It belongs to the UbiX/PAD1 family.

The enzyme catalyses dimethylallyl phosphate + FMNH2 = prenylated FMNH2 + phosphate. Functionally, flavin prenyltransferase that catalyzes the synthesis of the prenylated FMN cofactor (prenyl-FMN) for 4-hydroxy-3-polyprenylbenzoic acid decarboxylase UbiD. The prenyltransferase is metal-independent and links a dimethylallyl moiety from dimethylallyl monophosphate (DMAP) to the flavin N5 and C6 atoms of FMN. The polypeptide is Flavin prenyltransferase UbiX (Methanothermobacter thermautotrophicus (strain ATCC 29096 / DSM 1053 / JCM 10044 / NBRC 100330 / Delta H) (Methanobacterium thermoautotrophicum)).